Reading from the N-terminus, the 295-residue chain is Probable phosphoglycerate mutase PMU1 (295 aa).

Residue His-61 is the Tele-phosphohistidine intermediate of the active site. The Proton donor/acceptor role is filled by Glu-170.

The protein belongs to the phosphoglycerate mutase family.

It localises to the cytoplasm. The protein resides in the nucleus. Probable phosphomutase that may have a function related to the manipulation of phosphate groups on carbohydrates. Reduces trehalose-6-phosphate levels when overexpressed in TPS2-deleted cells. Reduces 5'-Phosphoribosyl-4-carboxamide-5-aminoimidazole (AICAR) levels, a metabolic intermediate at the crossroads between AMP and histidine biosynthesis pathways, when overexpressed in a ADE3-ADE16-ADE17 triple deletant. This Saccharomyces cerevisiae (strain ATCC 204508 / S288c) (Baker's yeast) protein is Probable phosphoglycerate mutase PMU1.